The sequence spans 315 residues: Homoserine kinase (315 aa).

97–107 (PPARGLGSSAT) is an ATP binding site.

The protein belongs to the GHMP kinase family. Homoserine kinase subfamily.

It is found in the cytoplasm. It catalyses the reaction L-homoserine + ATP = O-phospho-L-homoserine + ADP + H(+). Its pathway is amino-acid biosynthesis; L-threonine biosynthesis; L-threonine from L-aspartate: step 4/5. Catalyzes the ATP-dependent phosphorylation of L-homoserine to L-homoserine phosphate. The protein is Homoserine kinase of Synechococcus sp. (strain WH7803).